Consider the following 412-residue polypeptide: NADH-ubiquinone oxidoreductase 49 kDa subunit (412 aa).

This sequence belongs to the complex I 49 kDa subunit family.

Its subcellular location is the hydrogenosome. It carries out the reaction a ubiquinone + NADH + 5 H(+)(in) = a ubiquinol + NAD(+) + 4 H(+)(out). Transfer of electrons from NADH to the respiratory chain. The immediate electron acceptor for the enzyme is believed to be ubiquinone. Component of the iron-sulfur (IP) fragment of the enzyme. This is NADH-ubiquinone oxidoreductase 49 kDa subunit (nad7) from Nyctotherus ovalis.